The following is a 423-amino-acid chain: Putative competence-damage inducible protein (423 aa).

It belongs to the CinA family.

The protein is Putative competence-damage inducible protein of Streptococcus pyogenes serotype M49 (strain NZ131).